The following is a 193-amino-acid chain: Acyl-homoserine-lactone synthase (193 aa).

It belongs to the autoinducer synthase family.

The catalysed reaction is a fatty acyl-[ACP] + S-adenosyl-L-methionine = an N-acyl-L-homoserine lactone + S-methyl-5'-thioadenosine + holo-[ACP] + H(+). In terms of biological role, required for the synthesis of OHHL (N-(3-oxohexanoyl)-L-homoserine lactone) also known as VAI or N-(beta-ketocaproyl)homoserine lactone or 3-oxo-N-(tetrahydro-2-oxo-3-furanyl)-hexanamide, an autoinducer molecule which binds to LuxR and thus acts in bioluminescence regulation. The sequence is that of Acyl-homoserine-lactone synthase (luxI) from Aliivibrio fischeri (Vibrio fischeri).